The chain runs to 363 residues: Mitogen-activated protein kinase 12 (363 aa).

Positions 25–309 (YKDLKQVGTG…AAEALAFPFF (285 aa)) constitute a Protein kinase domain. ATP-binding positions include 31–39 (VGTGAYGTV) and Lys54. The Proton acceptor role is filled by Asp151. Phosphothreonine is present on Thr181. The TXY signature appears at 181 to 183 (TGY). The residue at position 183 (Tyr183) is a Phosphotyrosine.

This sequence belongs to the protein kinase superfamily. CMGC Ser/Thr protein kinase family. MAP kinase subfamily. Requires Mg(2+) as cofactor. Dually phosphorylated on Thr-181 and Tyr-183, which activates the enzyme.

It is found in the cytoplasm. The catalysed reaction is L-seryl-[protein] + ATP = O-phospho-L-seryl-[protein] + ADP + H(+). It carries out the reaction L-threonyl-[protein] + ATP = O-phospho-L-threonyl-[protein] + ADP + H(+). Its activity is regulated as follows. Activated by threonine and tyrosine phosphorylation. Functionally, serine/threonine kinase which acts as an essential component of the MAP kinase signal transduction pathway. MAPK12 is one of the four p38 MAPKs which play an important role in the cascades of cellular responses evoked by extracellular stimuli such as pro-inflammatory cytokines or physical stress leading to direct activation of transcription factors. Accordingly, p38 MAPKs phosphorylate a broad range of proteins and it has been estimated that they may have approximately 200 to 300 substrates each. Some of the targets are downstream kinases such as MAPKAPK2, which are activated through phosphorylation and further phosphorylate additional targets. This chain is Mitogen-activated protein kinase 12 (mapk12), found in Danio rerio (Zebrafish).